An 828-amino-acid chain; its full sequence is Protein ELFN1 (828 aa).

The signal sequence occupies residues 1–25 (MAGHGWGTAWVLVAAATLLHAGGLA). The Extracellular segment spans residues 26-418 (QGDCWLIEGD…VPSPSTATHY (393 aa)). LRR repeat units lie at residues 61-82 (TIVDLRLNENRIRSVQYASLSR), 85-106 (NLTYLNLTKNEIGYIEDGAFSG), 109-130 (NLQVLQLGYNRLRNLTEGMLRG), 133-154 (KLEYLYLQANLIEVVMASAFWE), and 157-178 (NIVNIDLSMNRIQQLGSGTFAG). Residues N85, N90, and N122 are each glycosylated (N-linked (GlcNAc...) asparagine). Positions 190–253 (NPFYCSCELL…LSKLQSVCTE (64 aa)) constitute an LRRCT domain. N-linked (GlcNAc...) asparagine glycosylation is present at N210. Residues 258-293 (AEVLGPPRPVPGRSQPGHSPPPPPPEPSDMPCADDE) are disordered. Pro residues predominate over residues 275–285 (HSPPPPPPEPS). In terms of domain architecture, Fibronectin type-III spans 312–399 (QTEARPSMKV…HNHTCLTICL (88 aa)). N376 carries N-linked (GlcNAc...) asparagine glycosylation. The helical transmembrane segment at 419–439 (IMTILGCLFGMVLVLGAVYYC) threads the bilayer. Topologically, residues 440–828 (LRKRRRQEEK…WKGVSAQHKS (389 aa)) are cytoplasmic. Phosphoserine is present on residues S460 and S646. Disordered regions lie at residues 627 to 674 (HHSV…IEKS) and 697 to 731 (KSRQYGEHRHSYPGSHPAEPPAPPPPPPTHEGLGG). Low complexity predominate over residues 638-652 (RASTSSSGSARSPRT). A compositionally biased stretch (basic and acidic residues) spans 697–706 (KSRQYGEHRH). Over residues 714–725 (AEPPAPPPPPPT) the composition is skewed to pro residues.

As to quaternary structure, interacts with PPP1CA. As to expression, selectively expressed in perialvear somatostatin (Sst)-containing interneurons.

It is found in the membrane. The protein localises to the cell projection. It localises to the dendrite. Postsynaptic protein that regulates circuit dynamics in the central nervous system by modulating the temporal dynamics of interneuron recruitment. Specifically present in excitatory synapses onto oriens-lacunosum molecular (OLM) interneurons and acts as a regulator of presynaptic release probability to direct the formation of highly facilitating pyramidal-OLM synapses. Inhibits phosphatase activity of protein phosphatase 1 (PP1) complexes. The polypeptide is Protein ELFN1 (Elfn1) (Mus musculus (Mouse)).